The sequence spans 1120 residues: ISWI chromatin-remodeling complex ATPase ISW2 (1120 aa).

Residues 1-16 (MTTQQEEQRSDTKNSK) are compositionally biased toward basic and acidic residues. 2 disordered regions span residues 1–58 (MTTQ…VEDR) and 129–153 (LSKSHSTVSSSSRHHRKTEKEEDAE). Phosphoserine is present on residues S17 and S19. The segment covering 47 to 58 (LSDKEIYTVEDR) has biased composition (basic and acidic residues). The region spanning 196-361 (ISLHENKLSG…WALLNFLLPD (166 aa)) is the Helicase ATP-binding domain. 209–216 (DEMGLGKT) serves as a coordination point for ATP. Residues 312–315 (DEAH) carry the DEAH box motif. The Helicase C-terminal domain maps to 494–645 (ILDKLLKRLK…QLVIQQGTGK (152 aa)). Disordered regions lie at residues 764–783 (GGGSKSASKQTPQPKAPRAP) and 828–853 (NEGSDAEEEEGEYKNAANTEGHKGHE). S831 carries the post-translational modification Phosphoserine. The region spanning 886-938 (KAFTNWNKRDFMAFINACAKYGRDDMENIKKSIDSKTPEEVEVYAKIFWERLK) is the SANT domain. Residues 1062–1120 (PDANKKKRSRTSATREDTPLSQNESTRASTVPNLPTTMVTNQKDTNDHVDKRTKIDQEA) are disordered. T1079 carries the post-translational modification Phosphothreonine. Polar residues predominate over residues 1080 to 1104 (PLSQNESTRASTVPNLPTTMVTNQK). S1082 bears the Phosphoserine mark. A compositionally biased stretch (basic and acidic residues) spans 1105-1120 (DTNDHVDKRTKIDQEA).

This sequence belongs to the SNF2/RAD54 helicase family. ISWI subfamily. Component of the ISW2 complex, which at least consists of ISW2, ITC1, DLS1 and DPB4. May form a stable subcomplex with ITC1.

It localises to the nucleus. In terms of biological role, catalytic component of the ISW2 complex, which acts in remodeling the chromatin by catalyzing an ATP-dependent alteration in the structure of nucleosomal DNA. The ISW2 complex is involved in coordinating transcriptional repression and in inheritance of telomeric silencing. It is involved in repression of MAT a-specific genes, INO1, and early meiotic genes during mitotic growth dependent upon transcription factor UME6 and in a parallel pathway to the RPD3-SIN3 histone deacetylase complex. The protein is ISWI chromatin-remodeling complex ATPase ISW2 (ISW2) of Saccharomyces cerevisiae (strain ATCC 204508 / S288c) (Baker's yeast).